A 105-amino-acid polypeptide reads, in one-letter code: Large ribosomal subunit protein bL21c (105 aa).

The protein belongs to the bacterial ribosomal protein bL21 family. As to quaternary structure, part of the 50S ribosomal subunit.

It is found in the plastid. Its subcellular location is the chloroplast. Functionally, this protein binds to 23S rRNA. The sequence is that of Large ribosomal subunit protein bL21c from Thalassiosira pseudonana (Marine diatom).